We begin with the raw amino-acid sequence, 382 residues long: RNA binding protein fox-1 homolog 1-like (382 aa).

2 disordered regions span residues 34–79 (QEAG…AAHP) and 94–148 (GPQH…QPKR). The span at 49–65 (YAPPPSYPPPGQAPPTP) shows a compositional bias: pro residues. Over residues 101–110 (ESITASNTDD) the composition is skewed to polar residues. Residues 147–223 (KRLHVSNIPF…RKIEVNNATA (77 aa)) enclose the RRM domain.

Expressed during muscle development in adaxial cells, somites, cardiac precursors, finbuds and jaw muscle cells.

Its subcellular location is the nucleus. In terms of biological role, RNA-binding protein that regulates alternative splicing events by binding to 5'-GCAUG-3' elements. Regulates alternative splicing of tissue-specific exons. The protein is RNA binding protein fox-1 homolog 1-like (rbfox1l) of Danio rerio (Zebrafish).